The following is a 602-amino-acid chain: Threonine--tRNA ligase (602 aa).

Positions 208–499 are catalytic; that stretch reads DHRKLGTELK…LTEHCAGEFP (292 aa). Zn(2+)-binding residues include cysteine 300, histidine 351, and histidine 476.

This sequence belongs to the class-II aminoacyl-tRNA synthetase family. In terms of assembly, homodimer. Zn(2+) is required as a cofactor.

It localises to the cytoplasm. It catalyses the reaction tRNA(Thr) + L-threonine + ATP = L-threonyl-tRNA(Thr) + AMP + diphosphate + H(+). Functionally, catalyzes the attachment of threonine to tRNA(Thr) in a two-step reaction: L-threonine is first activated by ATP to form Thr-AMP and then transferred to the acceptor end of tRNA(Thr). Also edits incorrectly charged L-seryl-tRNA(Thr). This chain is Threonine--tRNA ligase, found in Campylobacter jejuni subsp. jejuni serotype O:6 (strain 81116 / NCTC 11828).